Here is a 1160-residue protein sequence, read N- to C-terminus: GPI inositol-deacylase (1160 aa).

The interval 1–92 (MHRRSSGSPV…DPRSSSAAMP (92 aa)) is disordered. The segment covering 57–92 (GASTPRSRNSSTWRMPSSATTTLLPPDPRSSSAAMP) has biased composition (polar residues). The N-linked (GlcNAc...) asparagine glycan is linked to asparagine 65. A helical transmembrane segment spans residues 120-140 (PCSILTALTSLLASLFLCAIL). Serine 307 is a catalytic residue. 2 helical membrane passes run 786 to 806 (LVMR…ALVL) and 832 to 852 (SSLP…ATSS). Residue asparagine 866 is glycosylated (N-linked (GlcNAc...) asparagine). 2 helical membrane passes run 886–906 (AFFW…CVIL) and 973–993 (ILLL…VACI). An N-linked (GlcNAc...) asparagine glycan is attached at asparagine 1019. Transmembrane regions (helical) follow at residues 1023-1043 (SIFI…LVWA), 1060-1080 (VLSI…TMIP), 1092-1112 (LILF…AYLL), and 1115-1135 (LANI…GFSV).

Belongs to the GPI inositol-deacylase family.

It is found in the endoplasmic reticulum membrane. Its function is as follows. Involved in inositol deacylation of GPI-anchored proteins which plays important roles in the quality control and ER-associated degradation of GPI-anchored proteins. The chain is GPI inositol-deacylase (bst1) from Aspergillus terreus (strain NIH 2624 / FGSC A1156).